The sequence spans 146 residues: Hemoglobin subunit beta (146 aa).

Position 1 is an N-acetylvaline (V1). A Globin domain is found at 2-146 (HLTGEEKSAV…VANALAHKYH (145 aa)). T12 bears the Phosphothreonine mark. Position 44 is a phosphoserine (S44). An N6-acetyllysine modification is found at K59. A heme b-binding site is contributed by H63. Position 82 is an N6-acetyllysine (K82). H92 lines the heme b pocket. At C93 the chain carries S-nitrosocysteine. Residue K144 is modified to N6-acetyllysine.

Belongs to the globin family. As to quaternary structure, heterotetramer of two alpha chains and two beta chains. In terms of tissue distribution, red blood cells.

In terms of biological role, involved in oxygen transport from the lung to the various peripheral tissues. The sequence is that of Hemoglobin subunit beta (HBB) from Leontocebus fuscicollis (Brown-mantled tamarin).